The following is a 309-amino-acid chain: Mitochondrial substrate carrier family protein ancA (309 aa).

Solcar repeat units lie at residues 10-102, 114-203, and 216-299; these read SSFV…YKKF, KFFI…AKGI, and ASWG…IQKL. 5 consecutive transmembrane segments (helical) span residues 12-41, 79-103, 113-133, 181-201, and 215-235; these read FVKD…LLLQ, LANV…KKFF, TKFF…SLLF, VSVG…DTAK, and WASW…SYPF. R84 and K96 together coordinate ADP. Position 239 (R239) interacts with ADP. The interval 239-244 is important for transport activity; the sequence is RRRMMM. Positions 239-244 match the Nucleotide carrier signature motif motif; it reads RRRMMM. A helical membrane pass occupies residues 276–293; the sequence is ALSNAIRGSGGALVLVIY.

Belongs to the mitochondrial carrier (TC 2.A.29) family. Monomer.

The protein resides in the mitochondrion inner membrane. The catalysed reaction is ADP(in) + ATP(out) = ADP(out) + ATP(in). Its activity is regulated as follows. The matrix-open state (m-state) is inhibited by the membrane-permeable bongkrekic acid (BKA). The cytoplasmic-open state (c-state) is inhibited by the membrane-impermeable toxic inhibitor carboxyatractyloside (CATR). In terms of biological role, ADP:ATP antiporter that mediates import of ADP into the mitochondrial matrix for ATP synthesis, and export of ATP out to fuel the cell. Cycles between the cytoplasmic-open state (c-state) and the matrix-open state (m-state): operates by the alternating access mechanism with a single substrate-binding site intermittently exposed to either the cytosolic (c-state) or matrix (m-state) side of the inner mitochondrial membrane. This chain is Mitochondrial substrate carrier family protein ancA (ancA), found in Dictyostelium discoideum (Social amoeba).